A 483-amino-acid polypeptide reads, in one-letter code: GTPase Der (483 aa).

EngA-type G domains are found at residues 3–167 (FTVA…GEER) and 212–387 (LRIA…EIWN). GTP-binding positions include 9 to 16 (GRPNVGKS), 56 to 60 (DTAGL), 119 to 122 (NKAE), 218 to 225 (GRPNAGKS), 265 to 269 (DTAGL), and 330 to 333 (NKWD). In terms of domain architecture, KH-like spans 388 to 472 (RRVSTGRLNR…PIRLSLRTSD (85 aa)).

This sequence belongs to the TRAFAC class TrmE-Era-EngA-EngB-Septin-like GTPase superfamily. EngA (Der) GTPase family. Associates with the 50S ribosomal subunit.

In terms of biological role, GTPase that plays an essential role in the late steps of ribosome biogenesis. This is GTPase Der from Brucella anthropi (strain ATCC 49188 / DSM 6882 / CCUG 24695 / JCM 21032 / LMG 3331 / NBRC 15819 / NCTC 12168 / Alc 37) (Ochrobactrum anthropi).